We begin with the raw amino-acid sequence, 545 residues long: Membrane protein insertase YidC (545 aa).

Residues 8–28 (ILLATVLSVGILILWQVIFPK) traverse the membrane as a helical segment. A disordered region spans residues 31–69 (PPKPAPTPAAEVAKPAAPAAPAPGAAAPAVPAPPPDAPE). Positions 38–59 (PAAEVAKPAAPAAPAPGAAAPA) are enriched in low complexity. The next 5 membrane-spanning stretches (helical) occupy residues 325-345 (IDYG…LYVM), 355-375 (WGVA…PLTY), 421-441 (LGGC…YAAL), 458-478 (LTAH…SFVM), and 497-517 (FFPG…TLYI).

The protein belongs to the OXA1/ALB3/YidC family. Type 1 subfamily. As to quaternary structure, interacts with the Sec translocase complex via SecD. Specifically interacts with transmembrane segments of nascent integral membrane proteins during membrane integration.

It is found in the cell inner membrane. Functionally, required for the insertion and/or proper folding and/or complex formation of integral membrane proteins into the membrane. Involved in integration of membrane proteins that insert both dependently and independently of the Sec translocase complex, as well as at least some lipoproteins. Aids folding of multispanning membrane proteins. The polypeptide is Membrane protein insertase YidC (Anaeromyxobacter dehalogenans (strain 2CP-C)).